The sequence spans 381 residues: DnaJ-related protein spj1 (381 aa).

The J domain occupies 5 to 74 (NFSQKQILGV…RKIYDAYGEE (70 aa)). The interval 72–93 (GEEGLNGQPGGPGGGPGEGFPG) is disordered. The span at 78 to 93 (GQPGGPGGGPGEGFPG) shows a compositional bias: gly residues. The segment at 138 to 225 (GGSFTLEIPV…CKGERVAEVV (88 aa)) adopts a CR-type zinc-finger fold. CXXCXGXG motif repeat units follow at residues 151-158 (CSVCSGQG), 172-179 (CPVCGGSG), 199-206 (CNACNGNG), and 213-220 (CPRCKGER). A Prevents secretion from ER motif is present at residues 378–381 (FDEL).

The protein resides in the endoplasmic reticulum. In Schizosaccharomyces pombe (strain 972 / ATCC 24843) (Fission yeast), this protein is DnaJ-related protein spj1 (spj1).